The sequence spans 304 residues: Small ribosomal subunit biogenesis GTPase RsgA (304 aa).

The region spanning histidine 78–proline 237 is the CP-type G domain. Residues threonine 127–aspartate 130 and glycine 179–serine 187 contribute to the GTP site. Positions 262, 267, 269, and 275 each coordinate Zn(2+).

The protein belongs to the TRAFAC class YlqF/YawG GTPase family. RsgA subfamily. In terms of assembly, monomer. Associates with 30S ribosomal subunit, binds 16S rRNA. Requires Zn(2+) as cofactor.

The protein resides in the cytoplasm. Its function is as follows. One of several proteins that assist in the late maturation steps of the functional core of the 30S ribosomal subunit. Helps release RbfA from mature subunits. May play a role in the assembly of ribosomal proteins into the subunit. Circularly permuted GTPase that catalyzes slow GTP hydrolysis, GTPase activity is stimulated by the 30S ribosomal subunit. This Synechococcus sp. (strain CC9605) protein is Small ribosomal subunit biogenesis GTPase RsgA.